A 186-amino-acid polypeptide reads, in one-letter code: Peptide deformylase (186 aa).

The Fe cation site is built by cysteine 113 and histidine 156. Residue glutamate 157 is part of the active site. Position 160 (histidine 160) interacts with Fe cation.

This sequence belongs to the polypeptide deformylase family. The cofactor is Fe(2+).

The catalysed reaction is N-terminal N-formyl-L-methionyl-[peptide] + H2O = N-terminal L-methionyl-[peptide] + formate. Removes the formyl group from the N-terminal Met of newly synthesized proteins. Requires at least a dipeptide for an efficient rate of reaction. N-terminal L-methionine is a prerequisite for activity but the enzyme has broad specificity at other positions. This chain is Peptide deformylase, found in Limosilactobacillus reuteri (strain DSM 20016) (Lactobacillus reuteri).